The sequence spans 109 residues: uncharacterized protein (109 aa).

It to E.coli YtfG C-terminal region.

This is an uncharacterized protein from Haemophilus influenzae (strain ATCC 51907 / DSM 11121 / KW20 / Rd).